The following is a 577-amino-acid chain: Protein CBFA2T1 (577 aa).

Positions 1–10 are enriched in basic and acidic residues; that stretch reads MPDRTEKHST. Positions 1 to 87 are disordered; sequence MPDRTEKHST…SSSSLANQQL (87 aa). A Phosphoserine modification is found at Ser14. Residues 42–59 are compositionally biased toward polar residues; that stretch reads SSFTPTTLTNGTSHSPTA. A compositionally biased stretch (low complexity) spans 68–87; it reads NGFSNGPSSSSSSSLANQQL. The TAFH domain occupies 93-188; it reads ARQLSKLKRF…NPAQYLAQHE (96 aa). The segment at 203–271 is disordered; the sequence is SELLLDVNEN…LPHPTPPPPQ (69 aa). The segment covering 211–237 has biased composition (basic and acidic residues); the sequence is ENGKRRTPDRTKENGFDREPLHSEHPS. Polar residues predominate over residues 244–258; that stretch reads SPGQRYSPNNGLSYQ. Residues 262 to 271 show a composition bias toward pro residues; that stretch reads LPHPTPPPPQ. An important for oligomerization region spans residues 310 to 356; the sequence is QEEMIDHRLTDREWAEEWKHLDHLLNCIMDMVEKTRRSLTVLRRCQE. The segment at 310 to 356 is nervy homology region 2 (NHR2); sequence QEEMIDHRLTDREWAEEWKHLDHLLNCIMDMVEKTRRSLTVLRRCQE. A disordered region spans residues 374 to 396; the sequence is DLKKGGSSSSSHSRQQSPVNPDP. Low complexity predominate over residues 380–390; it reads SSSSSHSRQQS. Position 390 is a phosphoserine (Ser390). A nervy homology region 3 (NHR3) region spans residues 416–465; sequence EEIWKKAEEAVNEVKRQAMTELQKAVSEAERKAHDMITTERAKMERTVAE. 8 residues coordinate Zn(2+): Cys488, Cys491, Cys499, Cys502, Cys508, Cys512, His520, and Cys524. The MYND-type zinc finger occupies 488–524; that stretch reads CWNCGRKASETCSGCNTARYCGSFCQHKDWEKHHHIC. The disordered stretch occupies residues 529–577; the sequence is QAPQQGDTPAVSSSVTPSSGAGSPMDTPPAATPRSTTPGTPSTIETTPR. Low complexity-rich tracts occupy residues 536–553 and 560–577; these read TPAV…GSPM and TPRS…TTPR.

It belongs to the CBFA2T family. As to quaternary structure, homotetramer. Heterotetramer with CBFA2T2 and CBFA2T3. Interacts with TCF12, SIN3A, HDAC1, HDAC2, HDAC3, NCOR1 and NCOR2. Interacts with ATN1 (via its N-terminus); the interaction enhances the transcriptional repression.

The protein localises to the nucleus. In terms of biological role, transcriptional corepressor which facilitates transcriptional repression via its association with DNA-binding transcription factors and recruitment of other corepressors and histone-modifying enzymes. Can repress the expression of MMP7 in a ZBTB33-dependent manner. Can repress transactivation mediated by TCF12. Acts as a negative regulator of adipogenesis. This Mus musculus (Mouse) protein is Protein CBFA2T1 (Runx1t1).